The sequence spans 435 residues: Eukaryotic peptide chain release factor subunit 1-3 (435 aa).

N-acetylalanine is present on Ala2.

The protein belongs to the eukaryotic release factor 1 family. In terms of assembly, heterodimer of two subunits, one of which binds GTP.

It is found in the cytoplasm. Functionally, directs the termination of nascent peptide synthesis (translation) in response to the termination codons UAA, UAG and UGA. Modulates plant growth and development. The polypeptide is Eukaryotic peptide chain release factor subunit 1-3 (Brassica oleracea var. botrytis (Cauliflower)).